Here is a 155-residue protein sequence, read N- to C-terminus: Large ribosomal subunit protein eL24 (155 aa).

A disordered region spans residues Leu87–Arg155. Basic and acidic residues predominate over residues Leu89–Lys129. A compositionally biased stretch (low complexity) spans Ala130–Ala143.

This sequence belongs to the eukaryotic ribosomal protein eL24 family. As to quaternary structure, component of the large ribosomal subunit. Mature ribosomes consist of a small (40S) and a large (60S) subunit. The 40S subunit contains about 32 different proteins and 1 molecule of RNA (18S). The 60S subunit contains 45 different proteins and 3 molecules of RNA (25S, 5.8S and 5S).

It is found in the cytoplasm. Its function is as follows. Component of the ribosome, a large ribonucleoprotein complex responsible for the synthesis of proteins in the cell. The small ribosomal subunit (SSU) binds messenger RNAs (mRNAs) and translates the encoded message by selecting cognate aminoacyl-transfer RNA (tRNA) molecules. The large subunit (LSU) contains the ribosomal catalytic site termed the peptidyl transferase center (PTC), which catalyzes the formation of peptide bonds, thereby polymerizing the amino acids delivered by tRNAs into a polypeptide chain. The nascent polypeptides leave the ribosome through a tunnel in the LSU and interact with protein factors that function in enzymatic processing, targeting, and the membrane insertion of nascent chains at the exit of the ribosomal tunnel. The sequence is that of Large ribosomal subunit protein eL24 from Candida albicans (strain SC5314 / ATCC MYA-2876) (Yeast).